The following is a 389-amino-acid chain: Phosphopentomutase (389 aa).

Asp9, Asp282, His287, Asp323, His324, and His335 together coordinate Mn(2+).

Belongs to the phosphopentomutase family. Mn(2+) serves as cofactor.

The protein resides in the cytoplasm. The catalysed reaction is 2-deoxy-alpha-D-ribose 1-phosphate = 2-deoxy-D-ribose 5-phosphate. The enzyme catalyses alpha-D-ribose 1-phosphate = D-ribose 5-phosphate. Its pathway is carbohydrate degradation; 2-deoxy-D-ribose 1-phosphate degradation; D-glyceraldehyde 3-phosphate and acetaldehyde from 2-deoxy-alpha-D-ribose 1-phosphate: step 1/2. In terms of biological role, isomerase that catalyzes the conversion of deoxy-ribose 1-phosphate (dRib-1-P) and ribose 1-phosphate (Rib-1-P) to deoxy-ribose 5-phosphate (dRib-5-P) and ribose 5-phosphate (Rib-5-P), respectively. In Kosmotoga olearia (strain ATCC BAA-1733 / DSM 21960 / TBF 19.5.1), this protein is Phosphopentomutase.